We begin with the raw amino-acid sequence, 180 residues long: Prothoracicotropic hormone (180 aa).

The first 15 residues, 1 to 15, serve as a signal peptide directing secretion; sequence MKLLILCVMVHGLLA. Residues 16–64 constitute a propeptide that is removed on maturation; the sequence is EGPGQVLWKEQVVAPEFLLDDREDIASNRNAFFYEDKRSFRPEGLGEQV. 2 disulfide bridges follow: Cys-88/Cys-123 and Cys-111/Cys-175.

In terms of assembly, homodimer; disulfide-linked.

It is found in the secreted. Functionally, PTTH is a brain secretory polypeptide of insects which stimulates the prothoracic glands to produce and release ecdysone, the steroid essential to insect development. In Camponotus floridanus (Florida carpenter ant), this protein is Prothoracicotropic hormone.